Consider the following 188-residue polypeptide: Protein GrpE (188 aa).

A compositionally biased stretch (basic and acidic residues) spans 1–16 (MEERNEQVVEEVKEAQ). Residues 1 to 31 (MEERNEQVVEEVKEAQVEEAVTPENSEETVE) are disordered.

Belongs to the GrpE family. As to quaternary structure, homodimer.

Its subcellular location is the cytoplasm. Functionally, participates actively in the response to hyperosmotic and heat shock by preventing the aggregation of stress-denatured proteins, in association with DnaK and GrpE. It is the nucleotide exchange factor for DnaK and may function as a thermosensor. Unfolded proteins bind initially to DnaJ; upon interaction with the DnaJ-bound protein, DnaK hydrolyzes its bound ATP, resulting in the formation of a stable complex. GrpE releases ADP from DnaK; ATP binding to DnaK triggers the release of the substrate protein, thus completing the reaction cycle. Several rounds of ATP-dependent interactions between DnaJ, DnaK and GrpE are required for fully efficient folding. The polypeptide is Protein GrpE (Bacillus cereus (strain G9842)).